The following is a 245-amino-acid chain: Carbohydrate deacetylase (245 aa).

2 residues coordinate Mg(2+): His-59 and His-125.

This sequence belongs to the YdjC deacetylase family. Homodimer. Mg(2+) is required as a cofactor.

Probably catalyzes the deacetylation of acetylated carbohydrates an important step in the degradation of oligosaccharides. The sequence is that of Carbohydrate deacetylase from Listeria monocytogenes serotype 4b (strain CLIP80459).